A 551-amino-acid chain; its full sequence is Hyaluronan synthase 2 (551 aa).

Residues 1–11 (MHCERFICILR) lie on the Cytoplasmic side of the membrane. A helical membrane pass occupies residues 12–32 (IIGTTLFGVSLLLGISAAYIV). Residues 33-45 (GYQFIQTDNYYFS) are Extracellular-facing. The helical transmembrane segment at 46–66 (FGLYGAILALHLIIQSLFAFL) threads the bilayer. At 67 to 374 (EHRKMKRSLE…NSLWFHKHHL (308 aa)) the chain is on the cytoplasmic side. A helical membrane pass occupies residues 375–395 (WMTYEAVITGFFPFFLIATVI). The Extracellular portion of the chain corresponds to 396–402 (QLFYRGR). The helical transmembrane segment at 403–423 (IWNILLFLLTVQLVGLIKSSF) threads the bilayer. At 424–429 (ASALRG) the chain is on the cytoplasmic side. The chain crosses the membrane as a helical span at residues 430-450 (NIVMVFMSFYSVLYMSSLLPA). Topologically, residues 451-470 (KMFAIATINKAGWGTSGRKT) are extracellular. A helical membrane pass occupies residues 471 to 491 (IVVNFIGLIPITVWFTILLGG). The Cytoplasmic segment spans residues 492 to 509 (VCYTIWRETKKPFSESEK). Residues 510–530 (IVLAVGAILYACYWVMLLTMY) form a helical membrane-spanning segment. The Extracellular segment spans residues 531-551 (VSLVMKCGRRRKEPQHDLVLA).

The protein belongs to the NodC/HAS family. In terms of assembly, homodimer; dimerization promotes enzymatic activity. It depends on Mg(2+) as a cofactor.

The protein localises to the cell membrane. Its subcellular location is the endoplasmic reticulum membrane. It is found in the vesicle. It localises to the golgi apparatus membrane. The protein resides in the lysosome. The enzyme catalyses [hyaluronan](n) + UDP-N-acetyl-alpha-D-glucosamine = N-acetyl-beta-D-glucosaminyl-(1-&gt;4)-[hyaluronan](n) + UDP + H(+). It carries out the reaction N-acetyl-beta-D-glucosaminyl-(1-&gt;4)-[hyaluronan](n) + UDP-alpha-D-glucuronate = [hyaluronan](n+1) + UDP + H(+). The protein operates within glycan biosynthesis; hyaluronan biosynthesis. Functionally, catalyzes the addition of GlcNAc or GlcUA monosaccharides to the nascent hyaluronan polymer. Therefore, it is essential to hyaluronan synthesis a major component of most extracellular matrices that has a structural role in tissues architectures and regulates cell adhesion, migration and differentiation. This is one of three isoenzymes responsible for cellular hyaluronan synthesis and it is particularly responsible for the synthesis of high molecular mass hyaluronan. This Xenopus laevis (African clawed frog) protein is Hyaluronan synthase 2 (has2).